A 428-amino-acid polypeptide reads, in one-letter code: Phosphomethylpyrimidine synthase 2 (428 aa).

Substrate contacts are provided by residues M94, Y123, H162, 184–186 (SRG), 225–228 (NGMR), and E264. H268 is a Zn(2+) binding site. Y291 contributes to the substrate binding site. H332 serves as a coordination point for Zn(2+). Positions 408, 411, and 415 each coordinate [4Fe-4S] cluster.

The protein belongs to the ThiC family. Requires [4Fe-4S] cluster as cofactor.

It carries out the reaction 5-amino-1-(5-phospho-beta-D-ribosyl)imidazole + S-adenosyl-L-methionine = 4-amino-2-methyl-5-(phosphooxymethyl)pyrimidine + CO + 5'-deoxyadenosine + formate + L-methionine + 3 H(+). Its pathway is cofactor biosynthesis; thiamine diphosphate biosynthesis. Its function is as follows. Catalyzes the synthesis of the hydroxymethylpyrimidine phosphate (HMP-P) moiety of thiamine from aminoimidazole ribotide (AIR) in a radical S-adenosyl-L-methionine (SAM)-dependent reaction. This is Phosphomethylpyrimidine synthase 2 from Methanosarcina acetivorans (strain ATCC 35395 / DSM 2834 / JCM 12185 / C2A).